A 372-amino-acid polypeptide reads, in one-letter code: MAYHSFLVEPISCHAWNKDRTQIAICPNNHEVHIYEKSGNKWVQVHELKEHNGQVTGIDWAPDSNRIVTCGTDRNAYVWTLKGRTWKPTLVILRINRAARCVRWAPNEKKFAVGSGSRVISICYFEQENDWWVCKHIKKPIRSTVLSLDWHPNSVLLAAGSCDFKCRIFSAYIKEVEERPAPTPWGSKMPFGELMFESSSSCGWVHGVCFSANGSRVAWVSHDSTVCLADADKKMAVATLASETLPLLAVTFITESSLVAAGHDCFPVLFTYDSAAGKLSFGGRLDVPKQSSQRGLTARERFQNLDKKASSEGSAAAGAGLDSLHKNSVSQISVLSGGKAKCSQFCTTGMDGGMSIWDVRSLESALKDLKIV.

6 WD repeats span residues 6–45 (FLVEPISCHAWNKDRTQIAICPNNHEVHIYEKSGNKWVQV), 50–89 (EHNGQVTGIDWAPDSNRIVTCGTDRNAYVWTLKGRTWKPT), 94–135 (RINR…WVCK), 140–179 (PIRSTVLSLDWHPNSVLLAAGSCDFKCRIFSAYIKEVEER), 242–280 (SETLPLLAVTFITESSLVAAGHDCFPVLFTYDSAAGKLS), and 324–367 (LHKN…SALK).

This sequence belongs to the WD repeat ARPC1 family. In terms of assembly, component of the Arp2/3 complex composed of ACTR2/ARP2, ACTR3/ARP3, ARPC1B/p41-ARC, ARPC2/p34-ARC, ARPC3/p21-ARC, ARPC4/p20-ARC and ARPC5/p16-ARC.

It is found in the cytoplasm. The protein localises to the cytoskeleton. It localises to the nucleus. Functionally, component of the Arp2/3 complex, a multiprotein complex that mediates actin polymerization upon stimulation by nucleation-promoting factor (NPF). The Arp2/3 complex mediates the formation of branched actin networks in the cytoplasm, providing the force for cell motility. In addition to its role in the cytoplasmic cytoskeleton, the Arp2/3 complex also promotes actin polymerization in the nucleus, thereby regulating gene transcription and repair of damaged DNA. The Arp2/3 complex promotes homologous recombination (HR) repair in response to DNA damage by promoting nuclear actin polymerization, leading to drive motility of double-strand breaks (DSBs). The protein is Actin-related protein 2/3 complex subunit 1B (ARPC1B) of Bos taurus (Bovine).